A 435-amino-acid polypeptide reads, in one-letter code: Galactose/lactose metabolism regulatory protein GAL80 (435 aa).

Met1 bears the N-acetylmethionine mark.

To K.lactis GAL80. Monomer.

In terms of biological role, this protein is a negative regulator for the gene expression of the lactose/galactose metabolic genes. It binds to GAL4 and so blocks transcriptional activation by it, in the absence of an inducing sugar. The sequence is that of Galactose/lactose metabolism regulatory protein GAL80 (GAL80) from Saccharomyces cerevisiae (strain ATCC 204508 / S288c) (Baker's yeast).